The sequence spans 321 residues: Ferrochelatase (321 aa).

Residues His194 and Glu275 each contribute to the Fe cation site.

It belongs to the ferrochelatase family.

Its subcellular location is the cytoplasm. The catalysed reaction is heme b + 2 H(+) = protoporphyrin IX + Fe(2+). It functions in the pathway porphyrin-containing compound metabolism; protoheme biosynthesis; protoheme from protoporphyrin-IX: step 1/1. In terms of biological role, catalyzes the ferrous insertion into protoporphyrin IX. The protein is Ferrochelatase of Wigglesworthia glossinidia brevipalpis.